The primary structure comprises 269 residues: Formamidopyrimidine-DNA glycosylase (269 aa).

Residue Pro-2 is the Schiff-base intermediate with DNA of the active site. The active-site Proton donor is Glu-3. The active-site Proton donor; for beta-elimination activity is the Lys-57. Residues His-90, Arg-109, and Lys-150 each contribute to the DNA site. The FPG-type zinc-finger motif lies at 235–269; the sequence is QVYGRHGEPCYTCGEFIQIAKYGQRSSFFCPSCQN. Arg-259 (proton donor; for delta-elimination activity) is an active-site residue.

It belongs to the FPG family. In terms of assembly, monomer. It depends on Zn(2+) as a cofactor.

The catalysed reaction is Hydrolysis of DNA containing ring-opened 7-methylguanine residues, releasing 2,6-diamino-4-hydroxy-5-(N-methyl)formamidopyrimidine.. It carries out the reaction 2'-deoxyribonucleotide-(2'-deoxyribose 5'-phosphate)-2'-deoxyribonucleotide-DNA = a 3'-end 2'-deoxyribonucleotide-(2,3-dehydro-2,3-deoxyribose 5'-phosphate)-DNA + a 5'-end 5'-phospho-2'-deoxyribonucleoside-DNA + H(+). In terms of biological role, involved in base excision repair of DNA damaged by oxidation or by mutagenic agents. Acts as a DNA glycosylase that recognizes and removes damaged bases. Has a preference for oxidized purines, such as 7,8-dihydro-8-oxoguanine (8-oxoG). Has AP (apurinic/apyrimidinic) lyase activity and introduces nicks in the DNA strand. Cleaves the DNA backbone by beta-delta elimination to generate a single-strand break at the site of the removed base with both 3'- and 5'-phosphates. This Baumannia cicadellinicola subsp. Homalodisca coagulata protein is Formamidopyrimidine-DNA glycosylase.